Here is a 448-residue protein sequence, read N- to C-terminus: Glutamyl-tRNA reductase (448 aa).

Substrate contacts are provided by residues 49-52 (TCNR), serine 109, 114-116 (ETQ), and glutamine 120. Cysteine 50 acts as the Nucleophile in catalysis. An NADP(+)-binding site is contributed by 189–194 (GAGEMS).

This sequence belongs to the glutamyl-tRNA reductase family. As to quaternary structure, homodimer.

It catalyses the reaction (S)-4-amino-5-oxopentanoate + tRNA(Glu) + NADP(+) = L-glutamyl-tRNA(Glu) + NADPH + H(+). The protein operates within porphyrin-containing compound metabolism; protoporphyrin-IX biosynthesis; 5-aminolevulinate from L-glutamyl-tRNA(Glu): step 1/2. In terms of biological role, catalyzes the NADPH-dependent reduction of glutamyl-tRNA(Glu) to glutamate 1-semialdehyde (GSA). In Staphylococcus aureus (strain Mu3 / ATCC 700698), this protein is Glutamyl-tRNA reductase.